The sequence spans 248 residues: 14-3-3 protein gamma-2 (248 aa).

The protein belongs to the 14-3-3 family. As to quaternary structure, homodimer, and heterodimer with other family members. In terms of tissue distribution, expressed in brain, gill, heart, intestine, kidney, liver, ovary, skeletal muscle, spleen and testis.

The protein localises to the cytoplasm. In terms of biological role, adapter protein implicated in the regulation of a large spectrum of both general and specialized signaling pathways. Binds to a large number of partners, usually by recognition of a phosphoserine or phosphothreonine motif. Binding generally results in the modulation of the activity of the binding partner. The chain is 14-3-3 protein gamma-2 from Oncorhynchus mykiss (Rainbow trout).